The chain runs to 257 residues: MAPSDDLVYMAKLAEQAERYDEMVEAMNSVAKLDEGLTKEERNLLSVGYKNLIGAKRAAMRIIGSIELKEETKGKESHVRQTAEYRRKVEAEMDKICCDVINIIDKYLIPHSSGAESSVFYYKMKGDYYRYLAEFKTGTEKIEVSELSLNAYETASKTAQTDLTPTDPIRLGLALNISVFYCEIMNSPDKACQLAKNAFDEAVAELPSLSEENYKDSTLIMQLLRDNLALWNSDMADDADDIRERTDTTGAKGDPAA.

The protein belongs to the 14-3-3 family.

In terms of biological role, is associated with a DNA binding complex that binds to the G box, a well-characterized cis-acting DNA regulatory element found in plant genes. The sequence is that of 14-3-3-like protein GF14-G (GF14G) from Oryza sativa subsp. japonica (Rice).